A 526-amino-acid polypeptide reads, in one-letter code: Bifunctional purine biosynthesis protein PurH (526 aa).

Residues 1–145 (MIRTALLSVS…KNHQDVTVLI (145 aa)) enclose the MGS-like domain.

This sequence belongs to the PurH family.

It catalyses the reaction (6R)-10-formyltetrahydrofolate + 5-amino-1-(5-phospho-beta-D-ribosyl)imidazole-4-carboxamide = 5-formamido-1-(5-phospho-D-ribosyl)imidazole-4-carboxamide + (6S)-5,6,7,8-tetrahydrofolate. The enzyme catalyses IMP + H2O = 5-formamido-1-(5-phospho-D-ribosyl)imidazole-4-carboxamide. It participates in purine metabolism; IMP biosynthesis via de novo pathway; 5-formamido-1-(5-phospho-D-ribosyl)imidazole-4-carboxamide from 5-amino-1-(5-phospho-D-ribosyl)imidazole-4-carboxamide (10-formyl THF route): step 1/1. It functions in the pathway purine metabolism; IMP biosynthesis via de novo pathway; IMP from 5-formamido-1-(5-phospho-D-ribosyl)imidazole-4-carboxamide: step 1/1. This chain is Bifunctional purine biosynthesis protein PurH, found in Polynucleobacter necessarius subsp. necessarius (strain STIR1).